Consider the following 404-residue polypeptide: MLFESIYIQCLNKFSKYKKFVCHTTCNCPNYKIIGYLLYFLCLCRPINCSLPLSRHDLAFGSFSYYLTMFLYRILVRLLQFYYFVKFSAILFLGFAVKGRSLFEKKQREKPNVLEGWDSRYIKLKKVRLHYVQTGSDDKPLMLFIHGYPEFWYSWRFQLKEFADKYRCVAIDQRGYNLSDKPKHVDNYSIDELTGDIRDVIEGLGYDKAIVVAHDWGGLVAWQFAEQYPEMVDKLICCNIPRPGSFRKRIYTSWSQFRKSWYMFFYQNEKIPEMLCSADDMKMLELCFRAKEIGIQNNKNFTDEDLEAWKYSFSMNGASFKYPINYYRNIFNAKKQQADLVLEMPTLIIWGTADGALDIEAAVDSLNTLKQGTMKKIEGASHWVQQDEPEMVNEHIKKFLNKYQ.

A helical transmembrane segment spans residues 74–96 (ILVRLLQFYYFVKFSAILFLGFA). The 250-residue stretch at 140–389 (PLMLFIHGYP…ASHWVQQDEP (250 aa)) folds into the AB hydrolase-1 domain. Aspartate 215 functions as the Nucleophile in the catalytic mechanism. Tyrosine 327 acts as the Proton donor in catalysis. Histidine 382 functions as the Proton acceptor in the catalytic mechanism.

This sequence belongs to the AB hydrolase superfamily. Epoxide hydrolase family.

The protein localises to the membrane. The catalysed reaction is an epoxide + H2O = an ethanediol. It carries out the reaction 8,9-epoxy-(5Z,11Z,14Z)-eicosatrienoate + H2O = 8,9-dihydroxy-(5Z,11Z,14Z)-eicosatrienoate. It catalyses the reaction 11,12-epoxy-(5Z,8Z,14Z)-eicosatrienoate + H2O = 11,12-dihydroxy-(5Z,8Z,14Z)-eicosatrienoate. The enzyme catalyses 14,15-epoxy-(5Z,8Z,11Z)-eicosatrienoate + H2O = 14,15-dihydroxy-(5Z,8Z,11Z)-eicosatrienoate. The catalysed reaction is 12,13-epoxy-(9Z)-octadecenoate + H2O = 12,13-dihydroxy-(9Z)-octadecenoate. It carries out the reaction 9,10-epoxy-(12Z)-octadecenoate + H2O = 9,10-dihydroxy-(12Z)-octadecenoate. Its pathway is lipid metabolism. Catalyzes the hydrolysis of epoxide-containing fatty acids. Active against epoxyeicosatrienoic acids (EETs) including 8,9-epoxy-(5Z,11Z,14Z)-eicosatrienoate (8,9-EET), 11,12-epoxy-(5Z,8Z,14Z)-eicosatrienoate (11,12-EET) and 14,15-epoxy-(5Z,8Z,11Z)-eicosatrienoate (14,15-EET) and the linoleic acid metabolites 12,13-epoxy-(9Z)-octadecenoate (12,13-EpOME) and 9,10-epoxy-(12Z)-octadecenoate (9,10-EpOME). These epoxides function as lipid signaling molecules, the enzyme can deplete the supply of the epoxide signal by transforming them into diol species that are more readily eliminated through excretion. The protein is Epoxide hydrolase 1 of Caenorhabditis elegans.